The sequence spans 454 residues: Mogroside I-E synthase (454 aa).

Residue His18 is the Proton acceptor of the active site. His18 provides a ligand contact to an anthocyanidin. Asp111 serves as the catalytic Charge relay. His144 serves as a coordination point for an anthocyanidin. A disulfide bond links Cys259 and Cys331. UDP-alpha-D-glucose contacts are provided by Ser278, Cys331, Gln333, Trp351, Asn352, Ser353, and Glu356. Ala371 provides a ligand contact to an anthocyanidin. UDP-alpha-D-glucose-binding residues include Asp372 and Gln373.

It belongs to the UDP-glycosyltransferase family. As to expression, highly expressed in young fruits 15 days after anthesis (15-DAA).

The enzyme catalyses mogrol + UDP-alpha-D-glucose = mogroside IE + UDP + H(+). The protein operates within secondary metabolite biosynthesis; terpenoid biosynthesis. Activity is increased by Mg(2+). Functionally, UDP-glycosyltransferase involved in the biosynthesis of cucurbitacin and mogroside tetracyclic triterpene natural products (e.g. siamenoside I and mogrosides IV, V and VI). Cucurbitacins have cytotoxic properties and exhibit deterrent taste as a defense barrier against herbivores. Mogrosides are nonsugar highly oxygenated compounds used as high-intensity zero-calorie sweeteners; they also possess pharmacological properties such as regulating immunity, lowering blood sugar and lipid levels, protecting the liver, and acting as antioxidants and antitumor agents. Catalyzes the transfer of a glucose moiety to the C-3 hydroxyl of mogrol to form mogroside I-E. Besides mogrol, UGT74AC1 also shows activity in vitro with quercetin and naringenin as substrate. The protein is Mogroside I-E synthase of Siraitia grosvenorii (Monk's fruit).